The following is a 429-amino-acid chain: Cytochrome c biogenesis protein CcsB (429 aa).

The next 3 membrane-spanning stretches (helical) occupy residues 14–34 (LKVA…GTAL), 72–92 (SFWF…CSWK), and 162–182 (VGPP…TYGV).

The protein belongs to the Ccs1/CcsB family. As to quaternary structure, may interact with CcsA.

It is found in the cellular thylakoid membrane. In terms of biological role, required during biogenesis of c-type cytochromes (cytochrome c6 and cytochrome f) at the step of heme attachment. The protein is Cytochrome c biogenesis protein CcsB of Prochlorococcus marinus (strain SARG / CCMP1375 / SS120).